Reading from the N-terminus, the 92-residue chain is Small ribosomal subunit protein uS19c (92 aa).

Belongs to the universal ribosomal protein uS19 family.

It is found in the plastid. It localises to the chloroplast. Protein S19 forms a complex with S13 that binds strongly to the 16S ribosomal RNA. The sequence is that of Small ribosomal subunit protein uS19c from Manihot esculenta (Cassava).